We begin with the raw amino-acid sequence, 187 residues long: Peptidyl-tRNA hydrolase (187 aa).

Y14 contributes to the tRNA binding site. H19 acts as the Proton acceptor in catalysis. 3 residues coordinate tRNA: Y64, N66, and N112.

This sequence belongs to the PTH family. Monomer.

The protein resides in the cytoplasm. The enzyme catalyses an N-acyl-L-alpha-aminoacyl-tRNA + H2O = an N-acyl-L-amino acid + a tRNA + H(+). Hydrolyzes ribosome-free peptidyl-tRNAs (with 1 or more amino acids incorporated), which drop off the ribosome during protein synthesis, or as a result of ribosome stalling. Its function is as follows. Catalyzes the release of premature peptidyl moieties from peptidyl-tRNA molecules trapped in stalled 50S ribosomal subunits, and thus maintains levels of free tRNAs and 50S ribosomes. This is Peptidyl-tRNA hydrolase from Bdellovibrio bacteriovorus (strain ATCC 15356 / DSM 50701 / NCIMB 9529 / HD100).